Reading from the N-terminus, the 240-residue chain is Phosphoribosylaminoimidazole-succinocarboxamide synthase (240 aa).

The protein belongs to the SAICAR synthetase family.

The enzyme catalyses 5-amino-1-(5-phospho-D-ribosyl)imidazole-4-carboxylate + L-aspartate + ATP = (2S)-2-[5-amino-1-(5-phospho-beta-D-ribosyl)imidazole-4-carboxamido]succinate + ADP + phosphate + 2 H(+). The protein operates within purine metabolism; IMP biosynthesis via de novo pathway; 5-amino-1-(5-phospho-D-ribosyl)imidazole-4-carboxamide from 5-amino-1-(5-phospho-D-ribosyl)imidazole-4-carboxylate: step 1/2. This is Phosphoribosylaminoimidazole-succinocarboxamide synthase from Wigglesworthia glossinidia brevipalpis.